The primary structure comprises 314 residues: MSRPRRRGRDIHGVLLLDKPQGLSSNDALQKVKRLYNANRAGHTGALDPLATGMLPICLGEATKFSQFLLDSDKRYRVIARLGQRTDTSDADGQIVQERPVSFTQAQLDAALDSFRGDIKQVPSMYSALKYQGKKLYEYARQGIEVPREARSITVYELQFIRWEGDELELEIHCSKGTYIRTITDDLGELLGCGAHVIYLRRLQVATYPTERMVTLEQLNELLEQAHRQEIAPAELLDPLLMPMDSPVENYPEVNLLPVVAGYVKQGQPVQVAGAPASGMVRITEGEERKFIGVGDIADDGRVAPRRLVVEYFD.

H43 is a binding site for substrate. The active-site Nucleophile is D48. Y76, Y179, and L200 together coordinate substrate.

This sequence belongs to the pseudouridine synthase TruB family. Type 1 subfamily.

The catalysed reaction is uridine(55) in tRNA = pseudouridine(55) in tRNA. Its function is as follows. Responsible for synthesis of pseudouridine from uracil-55 in the psi GC loop of transfer RNAs. The polypeptide is tRNA pseudouridine synthase B (Serratia proteamaculans (strain 568)).